The chain runs to 267 residues: Alkaline ceramidase 3 (267 aa).

The Cytoplasmic segment spans residues 1 to 33 (MAPAADREGYWGPTTSTLDWCEENYSVTWYIAE). Ca(2+) is bound by residues aspartate 19, tryptophan 20, glutamate 22, asparagine 24, and glutamate 33. Residues 34-55 (FWNTVSNLIMIIPPMFGAVQSV) form a helical membrane-spanning segment. The Lumenal segment spans residues 56–61 (RDGLEK). The chain crosses the membrane as a helical span at residues 62–82 (RYIASYLALTVVGMGSWCFHM). A Zn(2+)-binding site is contributed by histidine 81. The Cytoplasmic segment spans residues 83–87 (TLKYE). The chain crosses the membrane as a helical span at residues 88–108 (MQLLDELPMIYSCCIFVYCMF). Over 109–118 (ECFKIKNSVN) the chain is Lumenal. Residues 119–139 (YHLLFTLVLFSLIVTTVYLKV) form a helical membrane-spanning segment. The Cytoplasmic portion of the chain corresponds to 140–141 (KE). Residues 142–162 (PIFHQVMYGMLVFTLVLRSIY) traverse the membrane as a helical segment. Residues 163 to 173 (IVTWVYPWLRG) lie on the Lumenal side of the membrane. The helical transmembrane segment at 174–194 (LGYTSLGIFLLGFLFWNIDNI) threads the bilayer. Over 195–215 (FCESLRNFRKKVPPIIGITTQ) the chain is Cytoplasmic. Residues 216-236 (FHAWWHILTGLGSYLHILFSL) traverse the membrane as a helical segment. 2 residues coordinate Zn(2+): histidine 217 and histidine 221. Residues 237–267 (YTRTLYLRYRPKVKFLFGIWPVILFEPLRKH) are Lumenal-facing.

Belongs to the alkaline ceramidase family. The cofactor is Zn(2+). As to expression, ubiquitously expressed. Highly expressed in placenta. Expressed in erythrocytes.

The protein localises to the endoplasmic reticulum membrane. The protein resides in the golgi apparatus membrane. The catalysed reaction is an N-acyl-(4R)-4-hydroxysphinganine + H2O = (4R)-hydroxysphinganine + a fatty acid. The enzyme catalyses N-(5Z,8Z,11Z,14Z-eicosatetraenoyl)-sphing-4-enine + H2O = sphing-4-enine + (5Z,8Z,11Z,14Z)-eicosatetraenoate. It catalyses the reaction N-(5Z,8Z,11Z,14Z-eicosatetraenoyl)-sphinganine + H2O = sphinganine + (5Z,8Z,11Z,14Z)-eicosatetraenoate. It carries out the reaction N-(5Z,8Z,11Z,14Z-eicosatetraenoyl)-(4R)-hydroxysphinganine + H2O = (4R)-hydroxysphinganine + (5Z,8Z,11Z,14Z)-eicosatetraenoate. The catalysed reaction is N-(11Z-eicosenoyl)-sphing-4-enine + H2O = (11Z)-eicosenoate + sphing-4-enine. The enzyme catalyses N-(11Z-eicosenoyl)-sphinganine + H2O = (11Z)-eicosenoate + sphinganine. It catalyses the reaction N-(11Z-eicosenoyl)-(4R)-hydroxysphinganine + H2O = (11Z)-eicosenoate + (4R)-hydroxysphinganine. It carries out the reaction N-(9Z-octadecenoyl)-sphing-4-enine + H2O = sphing-4-enine + (9Z)-octadecenoate. The catalysed reaction is N-(9Z-octadecenoyl)-sphinganine + H2O = sphinganine + (9Z)-octadecenoate. The enzyme catalyses N-(9Z-octadecenoyl)-(4R)-hydroxysphinganine + H2O = (4R)-hydroxysphinganine + (9Z)-octadecenoate. It catalyses the reaction an N-acylsphing-4-enine + H2O = sphing-4-enine + a fatty acid. It carries out the reaction an N-acylsphinganine + H2O = sphinganine + a fatty acid. Its pathway is lipid metabolism; sphingolipid metabolism. With respect to regulation, activated by 5 mM Ca(2+) and inhibited by 5 mM Zn(2+). Endoplasmic reticulum and Golgi ceramidase that catalyzes the hydrolysis of unsaturated long-chain C18:1-, C20:1- and C20:4-ceramides, dihydroceramides and phytoceramides into sphingoid bases like sphingosine and free fatty acids at alkaline pH. Ceramides, sphingosine, and its phosphorylated form sphingosine-1-phosphate are bioactive lipids that mediate cellular signaling pathways regulating several biological processes including cell proliferation, apoptosis and differentiation. Controls the generation of sphingosine in erythrocytes, and thereby sphingosine-1-phosphate in plasma. Through the regulation of ceramides and sphingosine-1-phosphate homeostasis in the brain may play a role in neurons survival and function. By regulating the levels of pro-inflammatory ceramides in immune cells and tissues, may modulate the inflammatory response. The polypeptide is Alkaline ceramidase 3 (ACER3) (Homo sapiens (Human)).